Here is a 185-residue protein sequence, read N- to C-terminus: Ribosome-recycling factor (185 aa).

The protein belongs to the RRF family.

The protein localises to the cytoplasm. Its function is as follows. Responsible for the release of ribosomes from messenger RNA at the termination of protein biosynthesis. May increase the efficiency of translation by recycling ribosomes from one round of translation to another. The protein is Ribosome-recycling factor of Wigglesworthia glossinidia brevipalpis.